The chain runs to 150 residues: Large ribosomal subunit protein bL9 (150 aa).

Belongs to the bacterial ribosomal protein bL9 family.

In terms of biological role, binds to the 23S rRNA. The sequence is that of Large ribosomal subunit protein bL9 from Paraburkholderia phytofirmans (strain DSM 17436 / LMG 22146 / PsJN) (Burkholderia phytofirmans).